The chain runs to 167 residues: Urease accessory protein UreE (167 aa).

The segment at 137–158 is disordered; that stretch reads EAGAYQSAPHGHSHSHAHGHDH.

The protein belongs to the UreE family.

It is found in the cytoplasm. Its function is as follows. Involved in urease metallocenter assembly. Binds nickel. Probably functions as a nickel donor during metallocenter assembly. This chain is Urease accessory protein UreE, found in Pseudomonas putida (strain ATCC 700007 / DSM 6899 / JCM 31910 / BCRC 17059 / LMG 24140 / F1).